The primary structure comprises 179 residues: ATP synthase subunit b, chloroplastic (179 aa).

A helical transmembrane segment spans residues 28–46 (IINIAALVGILIYAGRDFL).

Belongs to the ATPase B chain family. In terms of assembly, F-type ATPases have 2 components, F(1) - the catalytic core - and F(0) - the membrane proton channel. F(1) has five subunits: alpha(3), beta(3), gamma(1), delta(1), epsilon(1). F(0) has four main subunits: a(1), b(1), b'(1) and c(10-14). The alpha and beta chains form an alternating ring which encloses part of the gamma chain. F(1) is attached to F(0) by a central stalk formed by the gamma and epsilon chains, while a peripheral stalk is formed by the delta, b and b' chains.

It is found in the plastid. Its subcellular location is the chloroplast thylakoid membrane. Its function is as follows. F(1)F(0) ATP synthase produces ATP from ADP in the presence of a proton or sodium gradient. F-type ATPases consist of two structural domains, F(1) containing the extramembraneous catalytic core and F(0) containing the membrane proton channel, linked together by a central stalk and a peripheral stalk. During catalysis, ATP synthesis in the catalytic domain of F(1) is coupled via a rotary mechanism of the central stalk subunits to proton translocation. Functionally, component of the F(0) channel, it forms part of the peripheral stalk, linking F(1) to F(0). The protein is ATP synthase subunit b, chloroplastic of Trieres chinensis (Marine centric diatom).